A 607-amino-acid chain; its full sequence is Pyruvate decarboxylase 1 (607 aa).

Residues D69 and H156 each contribute to the substrate site. Residues 434–516 form a thiamine pyrophosphate binding region; it reads DSWFNCQKLK…FLINNGGYTI (83 aa). Residues D484, N511, and G513 each contribute to the Mg(2+) site. E517 is a binding site for substrate.

It belongs to the TPP enzyme family. As to quaternary structure, homotetramer. It depends on a metal cation as a cofactor. The cofactor is thiamine diphosphate. As to expression, highly expressed in seeds, and at lower levels in roots and siliques.

It catalyses the reaction a 2-oxocarboxylate + H(+) = an aldehyde + CO2. Functionally, may play a role in ethanolic fermentation during anoxia. In Arabidopsis thaliana (Mouse-ear cress), this protein is Pyruvate decarboxylase 1 (PDC1).